Reading from the N-terminus, the 420-residue chain is MLERPSFPRLGAGTRHHRPLGQTGEGSDWLLAFTGISGIAGMMIPYVPWGLIRAMQRGSIELTSPRGVWIFNCAILPSRLHRTVERKGNMKPDQDLFGKVYLADCLCDRRLRWLRKSDFQHTCCAWCQCHNIRTTAGPSSRCPERDRGELCGCGPARDRCRGGGYGRCLCGVGRIQIPTPNRGFPVLLRGGKPCRERVFHRSSSHAAGFLHEEQLLFHCVCGQGHVGYLGRGRQEISRHRRVDQRHHWTQTPKDCFRQQRGGVLGATRERCLYARQKRSPSPGRHPALGSPPAQLRQDHLHNPHRLSSRLHLAWVRPRTRHQTGPHEADPGHQRRHFRAAGGEIPVLGESGPGDRCAGRPRGFYYLRGFIGCESFVYEHGWVEPQERTWNCGFVVERGDGVVCGAGVEEEVGEDVQGRCY.

The segment at 1–21 is disordered; that stretch reads MLERPSFPRLGAGTRHHRPLG. A helical membrane pass occupies residues 29-49; it reads WLLAFTGISGIAGMMIPYVPW. Residues 275–298 form a disordered region; sequence RQKRSPSPGRHPALGSPPAQLRQD.

Its subcellular location is the membrane. The enzyme catalyses 3-oxopresphingofungin + NADPH + 2 H(+) = presphingofungin + NADP(+). The protein operates within secondary metabolite biosynthesis. Ketoreductase; part of the gene cluster that mediates the biosynthesis of sphingofungins, bioactive molecules acting as sphingolipid inhibitors via inhibiting serine palmitoyl transferase (SPT). Within the pathway, sphF catalyzes the reduction of the C-3 ketone of 3-keto-presphingofungin to produce presphingofungin. Sphingofungin biosynthesis starts with the PKS sphB that produces an C18 polyketide precursor 3-hydroxyoctadeca-4,10-dienoyl-ACP containing one delta-6 desaturation and one delta-12 desaturation. The aminoacyl transferase sphA uses the sphB product to produce 3-keto-presphingofungin by adding an aminomalonate molecule. SphF then reduces the C-3 ketone of 3-keto-presphingofungin which leads to presphingofungin. The cytochrome P450 monooxygenase sphH converts presphingofungin into sphingofungin B1 which is further converted to sphingofungin B by the dioxygenase sphC. SphC is also able to convert presphingofungin into sphingofungin B2. The acetyltransferase sphE acetylates sphingofungin B to produce sphingofungin C, but can also convert sphingofungin B1 into sphingofungin C1 and sphingofungin B2 into sphingofungin C2. Finally, sphingofungin C can be spontaneously converted into sphingofungin D. The chain is Ketoreductase sphF from Aspergillus fumigatus (strain CBS 144.89 / FGSC A1163 / CEA10) (Neosartorya fumigata).